Consider the following 808-residue polypeptide: Sucrose synthase isoform 1 (808 aa).

Residues 277 to 754 (MVFNVVILSP…GLKRIQEKYT (478 aa)) form a GT-B glycosyltransferase region.

It belongs to the glycosyltransferase 1 family. Plant sucrose synthase subfamily. As to quaternary structure, homotetramer. As to expression, expressed in stems, in roots at different developmental stages, and in flower buds, flowers and maturing seeds, with the highest levels in strong utilization sinks for sucrose such as growing stems and tap root tips.

It catalyses the reaction an NDP-alpha-D-glucose + D-fructose = a ribonucleoside 5'-diphosphate + sucrose + H(+). Fructose acts as a non-competitive inhibitor with an inhibition constant of 17.2 mM. In contrast, glucose inhibits uncompetitively with an inhibition constant of 4.3 mM. Sucrose-cleaving enzyme that provides UDP-glucose and fructose for various metabolic pathways. The sequence is that of Sucrose synthase isoform 1 from Daucus carota (Wild carrot).